Consider the following 471-residue polypeptide: Variant surface glycoprotein WRATAT A (471 aa).

Residues 1–18 (MSVLFLLLAITRTASVKA) form the signal peptide. N-linked (GlcNAc...) asparagine glycans are attached at residues Asn61 and Asn133. Positions 373–457 (QEQTLATTGT…ANTTGSSNSF (85 aa)) are disordered. A compositionally biased stretch (low complexity) spans 379-392 (TTGTKSSSPQSTQQ). 2 disulfide bridges follow: Cys401–Cys414 and Cys410–Cys427. Basic and acidic residues predominate over residues 401-447 (CNDKAKETECNSPCKWDKEEKDEKKRCKLSEEGKQAEKENQEGKDGK). Over residues 448–457 (ANTTGSSNSF) the composition is skewed to polar residues. Asn449 carries an N-linked (GlcNAc...) asparagine glycan. Ser454 carries GPI-anchor amidated serine lipidation. A propeptide spans 455-471 (NSFVIKTSPLLLAVLLL) (removed in mature form).

The protein resides in the cell membrane. Functionally, VSG forms a coat on the surface of the parasite. The trypanosome evades the immune response of the host by expressing a series of antigenically distinct VSGs from an estimated 1000 VSG genes. The chain is Variant surface glycoprotein WRATAT A from Trypanosoma brucei rhodesiense.